We begin with the raw amino-acid sequence, 137 residues long: Holo-[acyl-carrier-protein] synthase (137 aa).

Mg(2+)-binding residues include Asp8 and Glu57.

The protein belongs to the P-Pant transferase superfamily. AcpS family. Mg(2+) is required as a cofactor.

The protein localises to the cytoplasm. The enzyme catalyses apo-[ACP] + CoA = holo-[ACP] + adenosine 3',5'-bisphosphate + H(+). In terms of biological role, transfers the 4'-phosphopantetheine moiety from coenzyme A to a Ser of acyl-carrier-protein. The protein is Holo-[acyl-carrier-protein] synthase of Mesorhizobium japonicum (strain LMG 29417 / CECT 9101 / MAFF 303099) (Mesorhizobium loti (strain MAFF 303099)).